The following is a 549-amino-acid chain: Oxygen-dependent choline dehydrogenase (549 aa).

4–33 (DFVIIGSGSAGSAMAYRLSENGRYSVIVIE) contacts FAD. His465 acts as the Proton acceptor in catalysis.

The protein belongs to the GMC oxidoreductase family. It depends on FAD as a cofactor.

It carries out the reaction choline + A = betaine aldehyde + AH2. The catalysed reaction is betaine aldehyde + NAD(+) + H2O = glycine betaine + NADH + 2 H(+). Its pathway is amine and polyamine biosynthesis; betaine biosynthesis via choline pathway; betaine aldehyde from choline (cytochrome c reductase route): step 1/1. Its function is as follows. Involved in the biosynthesis of the osmoprotectant glycine betaine. Catalyzes the oxidation of choline to betaine aldehyde and betaine aldehyde to glycine betaine at the same rate. This Brucella suis biovar 1 (strain 1330) protein is Oxygen-dependent choline dehydrogenase.